Here is a 306-residue protein sequence, read N- to C-terminus: Foldase protein PrsA (306 aa).

The signal sequence occupies residues 1-20 (MRRKIALFLALIFVGVSLVS). Cys-21 carries the N-palmitoyl cysteine lipid modification. Cys-21 carries the S-diacylglycerol cysteine lipid modification. In terms of domain architecture, PpiC spans 165 to 255 (FEVMRARHIL…YGYHIIKSEG (91 aa)).

It belongs to the PrsA family.

Its subcellular location is the cell membrane. The catalysed reaction is [protein]-peptidylproline (omega=180) = [protein]-peptidylproline (omega=0). Plays a major role in protein secretion by helping the post-translocational extracellular folding of several secreted proteins. In Caldanaerobacter subterraneus subsp. tengcongensis (strain DSM 15242 / JCM 11007 / NBRC 100824 / MB4) (Thermoanaerobacter tengcongensis), this protein is Foldase protein PrsA.